The primary structure comprises 123 residues: UPF0102 protein Pput_4400 (123 aa).

The protein belongs to the UPF0102 family.

The protein is UPF0102 protein Pput_4400 of Pseudomonas putida (strain ATCC 700007 / DSM 6899 / JCM 31910 / BCRC 17059 / LMG 24140 / F1).